A 521-amino-acid polypeptide reads, in one-letter code: Transcription activator of gluconeogenesis SS1G_02293 (521 aa).

A compositionally biased stretch (acidic residues) spans 1–12 (MSGETEIDDPEV). The tract at residues 1–75 (MSGETEIDDP…KFDPKDPLRP (75 aa)) is disordered. Basic and acidic residues-rich tracts occupy residues 21-49 (YSDH…RPDG) and 65-74 (PKFDPKDPLR). Positions 84-112 (CFACQRAHLTCGDERPCQRCIKRGLADAC) form a DNA-binding region, zn(2)-C6 fungal-type. Disordered regions lie at residues 273-308 (SGSA…NPPF), 322-358 (VAPP…RDPS), and 478-501 (NTGN…PRMR). Residues 275 to 287 (SAETPPQDSSAGM) show a composition bias toward polar residues. Low complexity-rich tracts occupy residues 297–308 (NNNPAFNNNPPF), 337–351 (KSGP…SALG), and 480–494 (GNSG…GRGS). In terms of domain architecture, PAS spans 426-497 (TLFEYEDFML…GSSGRGSFTT (72 aa)).

The protein belongs to the ERT1/acuK family.

Its subcellular location is the nucleus. Functionally, transcription factor which regulates nonfermentable carbon utilization. Activator of gluconeogenetic genes. This is Transcription activator of gluconeogenesis SS1G_02293 from Sclerotinia sclerotiorum (strain ATCC 18683 / 1980 / Ss-1) (White mold).